Consider the following 75-residue polypeptide: MRVLDLILALITAAVVGYTIALVSNSGCYVHFDGRSATTTCPPGPWVESIANGLYTAGLARPHPEPECERRQSSW.

Topologically, residues 1 to 2 are lumenal; the sequence is MR. A helical membrane pass occupies residues 3–23; that stretch reads VLDLILALITAAVVGYTIALV. At 24–75 the chain is on the cytoplasmic side; sequence SNSGCYVHFDGRSATTTCPPGPWVESIANGLYTAGLARPHPEPECERRQSSW.

Belongs to the Tymovirales TGBp3 protein family.

It is found in the host endoplasmic reticulum membrane. Plays a role in viral cell-to-cell propagation, by facilitating genome transport to neighboring plant cells through plasmosdesmata. May induce the formation of granular vesicles derived from the Endoplasmic reticulum, which align on actin filaments. This Strawberry mild yellow edge-associated virus (SMYEaV) protein is Movement protein TGBp3.